The primary structure comprises 237 residues: GCN5-related N-acetyltransferase 3, chloroplastic (237 aa).

A chloroplast-targeting transit peptide spans 1–93; the sequence is MGLVGCVGKS…RAISRSDVIV (93 aa). The N-acetyltransferase domain occupies 94 to 237; it reads SVFCKPQHVD…TMMFTKSLEA (144 aa). Residues 171–173, 179–184, 207–209, and phenylalanine 214 contribute to the acetyl-CoA site; these read LMV, RMGIGK, and FED.

Belongs to the acetyltransferase family. GNAT subfamily. Oligomer. In terms of processing, autoacetylated. Expressed in green tissues.

The protein resides in the plastid. It is found in the chloroplast. It catalyses the reaction an N-terminal L-alpha-aminoacyl-[protein] + acetyl-CoA = N-terminal N(alpha)-acetyl-L-alpha-aminoacyl-[protein] + CoA + H(+). The catalysed reaction is L-lysyl-[protein] + acetyl-CoA = N(6)-acetyl-L-lysyl-[protein] + CoA + H(+). Protein acetyltransferase with dual specificity triggering both N-alpha-acetylation (NTA) and epsilon-lysine acetylation (KA), possibly with a low efficiency or toward specific plastid substrates. The sequence is that of GCN5-related N-acetyltransferase 3, chloroplastic from Arabidopsis thaliana (Mouse-ear cress).